We begin with the raw amino-acid sequence, 231 residues long: Large ribosomal subunit protein uL5m (231 aa).

This sequence belongs to the universal ribosomal protein uL5 family.

It is found in the mitochondrion. This Prototheca wickerhamii protein is Large ribosomal subunit protein uL5m (RPL5).